A 344-amino-acid polypeptide reads, in one-letter code: Tripartite motif-containing protein 44 (344 aa).

Residues 69–165 (PPASGDDALP…ETEAESEFDP (97 aa)) are disordered. Residues 88 to 165 (EGEVESEVGE…ETEAESEFDP (78 aa)) show a composition bias toward acidic residues. Residues 174 to 215 (VAKRKCPDHGLDLSTYCQEDRQLICVLCPVIGAHRGHQLSTL) form a B box-type zinc finger. Zn(2+) is bound by residues C179, H182, C201, and H207. The stretch at 290-325 (AHVTEILADIQSHMDRLMTQMAQAKEQLDTSNESAE) forms a coiled coil. Residues 309–344 (QMAQAKEQLDTSNESAEPKAEGDEEGPSGASEEEDT) form a disordered region. Over residues 330-344 (GDEEGPSGASEEEDT) the composition is skewed to acidic residues. Phosphoserine occurs at positions 336 and 339.

As to quaternary structure, interacts (via coiled coil) with TRIM17 (via coiled coil).

May play a role in the process of differentiation and maturation of neuronal cells. May regulate the activity of TRIM17. Is a negative regulator of PAX6 expression. The protein is Tripartite motif-containing protein 44 (Trim44) of Rattus norvegicus (Rat).